A 142-amino-acid polypeptide reads, in one-letter code: Large ribosomal subunit protein bL17 (142 aa).

It belongs to the bacterial ribosomal protein bL17 family. In terms of assembly, part of the 50S ribosomal subunit. Contacts protein L32.

This Protochlamydia amoebophila (strain UWE25) protein is Large ribosomal subunit protein bL17.